We begin with the raw amino-acid sequence, 158 residues long: Kalata-B3/B6 (158 aa).

The first 22 residues, 1–22 (MAKFTKSLVLCLLLAAFVGAFG), serve as a signal peptide directing secretion. Residues 23-66 (AELSEADKANVVNEIAANIQREILKGVKSSETTLTMFLKEMQLK) constitute a propeptide that is removed on maturation. The segment at residues 67–96 (GLPTCGETCFGGTCNTPGCSCSSWPICTRN) is a cross-link (cyclopeptide (Gly-Asn)). Intrachain disulfides connect C71–C85, C75–C87, and C80–C93. Residues 97–121 (GLPKRAGVKSSETTLTMFLKEMQLK) constitute a propeptide that is removed on maturation. Residues 122 to 151 (GLPTCGETCFGGTCNTPGCTCDPWPICTRD) constitute a cross-link (cyclopeptide (Gly-Asp)). 3 cysteine pairs are disulfide-bonded: C126–C140, C130–C142, and C135–C148. Positions 152 to 158 (GLPSAAA) are excised as a propeptide.

This sequence belongs to the cyclotide family. Moebius subfamily. Post-translationally, kalata-B3 and kalata-B6 are cyclic peptides.

Probably participates in a plant defense mechanism. Has hemolytic activity. The sequence is that of Kalata-B3/B6 (OAK2) from Oldenlandia affinis.